Consider the following 207-residue polypeptide: Urease accessory protein UreG (207 aa).

12–19 (GPVGAGKT) is a GTP binding site.

Belongs to the SIMIBI class G3E GTPase family. UreG subfamily. As to quaternary structure, homodimer. UreD, UreF and UreG form a complex that acts as a GTP-hydrolysis-dependent molecular chaperone, activating the urease apoprotein by helping to assemble the nickel containing metallocenter of UreC. The UreE protein probably delivers the nickel.

Its subcellular location is the cytoplasm. In terms of biological role, facilitates the functional incorporation of the urease nickel metallocenter. This process requires GTP hydrolysis, probably effectuated by UreG. In Cereibacter sphaeroides (strain ATCC 17023 / DSM 158 / JCM 6121 / CCUG 31486 / LMG 2827 / NBRC 12203 / NCIMB 8253 / ATH 2.4.1.) (Rhodobacter sphaeroides), this protein is Urease accessory protein UreG.